Consider the following 1669-residue polypeptide: Collagen alpha-1(IV) chain (1669 aa).

The signal sequence occupies residues 1–27 (MGPRLGVWLLLLLAALLLHEESSRAAA). The propeptide at 28–172 (KGGCAGSGCG…LGHIPGTLLK (145 aa)) is N-terminal propeptide (7S domain). The disordered stretch occupies residues 50-1445 (ERGLPGLQGV…PPGTPSVDHG (1396 aa)). Residues 173-1440 (GERGYPGQPG…PGSMGPPGTP (1268 aa)) form a triple-helical region region. Positions 196-214 (VGPPGFTGPPGPPGPPGPP) are enriched in pro residues. 3-hydroxyproline is present on residues Pro204, Pro207, and Pro210. Basic and acidic residues-rich tracts occupy residues 254-263 (TAMRGEKGQK) and 289-298 (PGKDGEKGEK). Over residues 347 to 356 (GYPGGPGAKG) the composition is skewed to gly residues. Residues 357–366 (ETGPKGFPGI) are compositionally biased toward low complexity. Residues 367 to 376 (PGQPGPPGFP) show a composition bias toward pro residues. Over residues 396-412 (PGLPGVSLPGPSGRDGL) the composition is skewed to low complexity. Composition is skewed to pro residues over residues 413–424 (PGPPGPPGPPGQ) and 436–448 (PGPP…PGIP). The segment covering 485–494 (PGEIGFPGQP) has biased composition (low complexity). Composition is skewed to basic and acidic residues over residues 497-508 (KGDRGLPGRDGL) and 535-545 (FDIRLKGDKGD). A compositionally biased stretch (gly residues) spans 586 to 595 (GPPGGVGFPG). 3-hydroxyproline occurs at positions 587 and 602. The residue at position 603 (Pro603) is a 4-hydroxyproline. Pro605 carries the 3-hydroxyproline modification. 5 positions are modified to 4-hydroxyproline: Pro606, Pro623, Pro626, Pro629, and Pro632. Pro647 is subject to 3-hydroxyproline. 2 stretches are compositionally biased toward gly residues: residues 758 to 767 (GNVGGPGIPG) and 797 to 817 (GVPG…GPPG). The span at 847-871 (SQGLPGLTGQSGLPGLPGQQGTPGQ) shows a compositional bias: low complexity. A compositionally biased stretch (basic and acidic residues) spans 937 to 955 (SMDKVDMGSMKGEKGDQGE). Residues 1011 to 1020 (GSAGGMGLPG) show a composition bias toward gly residues. Composition is skewed to low complexity over residues 1030–1040 (IPGPQGIPGLP), 1101–1114 (SPGS…PGLP), and 1193–1212 (FPGL…QGFM). Position 1214 is a 3-hydroxyproline (Pro1214). The span at 1247 to 1258 (PGRPGPMGPPGL) shows a compositional bias: pro residues. Over residues 1290–1299 (GMPGIGGSPG) the composition is skewed to gly residues. Over residues 1413 to 1428 (FGPPGPRGFPGPPGPD) the composition is skewed to pro residues. The residue at position 1424 (Pro1424) is a 3-hydroxyproline. The 225-residue stretch at 1445–1669 (GFLVTRHSQT…SRCQVCMRRT (225 aa)) folds into the Collagen IV NC1 domain. 6 disulfides stabilise this stretch: Cys1460-Cys1551, Cys1493-Cys1548, Cys1505-Cys1511, Cys1570-Cys1665, Cys1604-Cys1662, and Cys1616-Cys1622. Residue Met1533 forms an S-Lysyl-methionine sulfilimine (Met-Lys) (interchain with K-1651) linkage. Lys1651 is covalently cross-linked (S-Lysyl-methionine sulfilimine (Lys-Met) (interchain with M-1533)).

It belongs to the type IV collagen family. As to quaternary structure, there are six type IV collagen isoforms, alpha 1(IV)-alpha 6(IV), each of which can form a triple helix structure with 2 other chains to generate type IV collagen network. Interacts with EFEMP2. In terms of processing, lysines at the third position of the tripeptide repeating unit (G-X-Y) are hydroxylated in all cases. The modified lysines can be O-glycosylated. Post-translationally, contains 4-hydroxyproline. Prolines at the third position of the tripeptide repeating unit (G-X-Y) are hydroxylated in some or all of the chains. Contains 3-hydroxyproline. This modification occurs on the first proline residue in the sequence motif Gly-Pro-Hyp, where Hyp is 4-hydroxyproline. In terms of processing, type IV collagens contain numerous cysteine residues which are involved in inter- and intramolecular disulfide bonding. 12 of these, located in the NC1 domain, are conserved in all known type IV collagens. Post-translationally, the trimeric structure of the NC1 domains is stabilized by covalent bonds (sulfilimine cross-links) between Lys and Met residues. These cross-links are important for the mechanical stability of the basement membrane. Sulfilimine cross-link is catalyzed by PXDN. Proteolytic processing produces the C-terminal NC1 peptide, arresten.

The protein resides in the secreted. Its subcellular location is the extracellular space. It is found in the extracellular matrix. The protein localises to the basement membrane. Type IV collagen is the major structural component of glomerular basement membranes (GBM), forming a 'chicken-wire' meshwork together with laminins, proteoglycans and entactin/nidogen. In terms of biological role, arresten, comprising the C-terminal NC1 domain, inhibits angiogenesis and tumor formation. The C-terminal half is found to possess the anti-angiogenic activity. Specifically inhibits endothelial cell proliferation, migration and tube formation. In Bos taurus (Bovine), this protein is Collagen alpha-1(IV) chain.